The sequence spans 489 residues: 3-octaprenyl-4-hydroxybenzoate carboxy-lyase (489 aa).

A Mn(2+)-binding site is contributed by N172. Prenylated FMN is bound by residues 175–177 (VYR), 189–191 (RWL), and 194–195 (RG). E240 provides a ligand contact to Mn(2+). The active-site Proton donor is D288.

The protein belongs to the UbiD family. Homohexamer. Prenylated FMN is required as a cofactor. It depends on Mn(2+) as a cofactor.

Its subcellular location is the cell membrane. The catalysed reaction is a 4-hydroxy-3-(all-trans-polyprenyl)benzoate + H(+) = a 2-(all-trans-polyprenyl)phenol + CO2. It participates in cofactor biosynthesis; ubiquinone biosynthesis. Catalyzes the decarboxylation of 3-octaprenyl-4-hydroxy benzoate to 2-octaprenylphenol, an intermediate step in ubiquinone biosynthesis. The protein is 3-octaprenyl-4-hydroxybenzoate carboxy-lyase of Wigglesworthia glossinidia brevipalpis.